Here is a 311-residue protein sequence, read N- to C-terminus: Probable manganese-dependent inorganic pyrophosphatase (311 aa).

Mn(2+) contacts are provided by histidine 9, aspartate 13, aspartate 15, aspartate 75, histidine 97, and aspartate 149.

This sequence belongs to the PPase class C family. Requires Mn(2+) as cofactor.

The protein resides in the cytoplasm. It catalyses the reaction diphosphate + H2O = 2 phosphate + H(+). The chain is Probable manganese-dependent inorganic pyrophosphatase from Lactobacillus helveticus (strain DPC 4571).